Here is a 133-residue protein sequence, read N- to C-terminus: MSGISDPVSNYMAQLRNAQEAEQTYVDIPASKLKRAMTQILLEKGYIKNFVNIDDEKQGLLRVYLKYDEYDQPAIRMLERVSRPGRREYADSDNLPEVKNGLGIVILSTSRGVMSDKEARRFGVGGEVLAKVF.

The protein belongs to the universal ribosomal protein uS8 family. Part of the 30S ribosomal subunit. Contacts proteins S5 and S12.

Functionally, one of the primary rRNA binding proteins, it binds directly to 16S rRNA central domain where it helps coordinate assembly of the platform of the 30S subunit. This Salinibacter ruber (strain DSM 13855 / M31) protein is Small ribosomal subunit protein uS8.